Here is a 243-residue protein sequence, read N- to C-terminus: MNRPPLPLAAHERLIFALDVPGHDEAIAWVDRLGESVAFYKIGMELLASGEYFHVLDALAKRNKRVFVDLKFFDIPATVAGTIRRLSQWPVSYCTVHGWHAGMLEAAAAANQGDMRLLAVTVLTSMGRPDLAAMGIDREPVDVVVERALAAQAAGIDGVIASGQEAGPIRRATGPAFSIVCPGIRPGGPVGDDQQRTVGVAQALADGADAIVVGRPIRLANDPAAAAAAIQAEIRAAVVPHRD.

Substrate is bound by residues Asp19, Lys41, 69-78 (DLKFFDIPAT), Thr124, Arg185, Gln194, Gly214, and Arg215. The active-site Proton donor is the Lys71.

It belongs to the OMP decarboxylase family. Type 1 subfamily. In terms of assembly, homodimer.

It carries out the reaction orotidine 5'-phosphate + H(+) = UMP + CO2. The protein operates within pyrimidine metabolism; UMP biosynthesis via de novo pathway; UMP from orotate: step 2/2. Its function is as follows. Catalyzes the decarboxylation of orotidine 5'-monophosphate (OMP) to uridine 5'-monophosphate (UMP). The protein is Orotidine 5'-phosphate decarboxylase of Xanthomonas campestris pv. campestris (strain B100).